The following is a 252-amino-acid chain: 29 kDa protein (252 aa).

Positions 222-252 (YDGPYRPATTRPKSLLSSEDVKRASNKKNSS) are disordered.

In Beta vulgaris (Sugar beet), this protein is 29 kDa protein.